A 432-amino-acid polypeptide reads, in one-letter code: uncharacterized protein (432 aa).

SIS domains are found at residues 105 to 244 (WLTE…DLVS) and 277 to 422 (CDKK…VDLP).

This is an uncharacterized protein from Saccharomyces cerevisiae (strain ATCC 204508 / S288c) (Baker's yeast).